The chain runs to 715 residues: Fatty acid oxidation complex subunit alpha (715 aa).

The tract at residues M1–P190 is enoyl-CoA hydratase. The 3-hydroxyacyl-CoA dehydrogenase stretch occupies residues G306–G714.

The protein in the N-terminal section; belongs to the enoyl-CoA hydratase/isomerase family. It in the central section; belongs to the 3-hydroxyacyl-CoA dehydrogenase family. In terms of assembly, heterotetramer of two alpha chains (FadJ) and two beta chains (FadI).

Its subcellular location is the cytoplasm. The enzyme catalyses a (3S)-3-hydroxyacyl-CoA = a (2E)-enoyl-CoA + H2O. It catalyses the reaction a 4-saturated-(3S)-3-hydroxyacyl-CoA = a (3E)-enoyl-CoA + H2O. It carries out the reaction a (3S)-3-hydroxyacyl-CoA + NAD(+) = a 3-oxoacyl-CoA + NADH + H(+). The catalysed reaction is (3S)-3-hydroxybutanoyl-CoA = (3R)-3-hydroxybutanoyl-CoA. It participates in lipid metabolism; fatty acid beta-oxidation. Functionally, catalyzes the formation of a hydroxyacyl-CoA by addition of water on enoyl-CoA. Also exhibits 3-hydroxyacyl-CoA epimerase and 3-hydroxyacyl-CoA dehydrogenase activities. This is Fatty acid oxidation complex subunit alpha from Salmonella paratyphi A (strain ATCC 9150 / SARB42).